Here is a 194-residue protein sequence, read N- to C-terminus: Peptidyl-tRNA hydrolase (194 aa).

Tyrosine 17 provides a ligand contact to tRNA. Catalysis depends on histidine 22, which acts as the Proton acceptor. The tRNA site is built by tyrosine 68, asparagine 70, and asparagine 116.

This sequence belongs to the PTH family. In terms of assembly, monomer.

Its subcellular location is the cytoplasm. It carries out the reaction an N-acyl-L-alpha-aminoacyl-tRNA + H2O = an N-acyl-L-amino acid + a tRNA + H(+). Functionally, hydrolyzes ribosome-free peptidyl-tRNAs (with 1 or more amino acids incorporated), which drop off the ribosome during protein synthesis, or as a result of ribosome stalling. Catalyzes the release of premature peptidyl moieties from peptidyl-tRNA molecules trapped in stalled 50S ribosomal subunits, and thus maintains levels of free tRNAs and 50S ribosomes. In Azotobacter vinelandii (strain DJ / ATCC BAA-1303), this protein is Peptidyl-tRNA hydrolase.